We begin with the raw amino-acid sequence, 159 residues long: MESSSSGTTSSTIQTSSGSEESLMEQRKRKRMLSNRESARRSRMKKQKLLDDLTAQVNHLKKENTEIVTSVSITTQHYLTVEAENSVLRAQLDELNHRLQSLNDIIEFLDSSNNNNNNNMGMCSNPLVGLECDDFFVNQMNMSYIMNQPLMASSDALMY.

Positions 1 to 21 are enriched in low complexity; that stretch reads MESSSSGTTSSTIQTSSGSEE. The disordered stretch occupies residues 1 to 47; it reads MESSSSGTTSSTIQTSSGSEESLMEQRKRKRMLSNRESARRSRMKKQ. A bZIP domain is found at 25–88; sequence EQRKRKRMLS…LTVEAENSVL (64 aa). Residues 27 to 48 form a basic motif region; sequence RKRKRMLSNRESARRSRMKKQK. Residues 53-67 form a leucine-zipper region; that stretch reads LTAQVNHLKKENTEI.

Forms heterodimers with BZIP1, BZIP9, BZIP10, BZIP25 and BZIP63. Interacts with ADA2B. In terms of tissue distribution, highly expressed in stems and flowers. Expressed in root tips, cotyledons, leaf vasculature, embryos, apical parts of siliques and funiculi.

Its subcellular location is the nucleus. In terms of biological role, transcription factor that binds to the DNA sequence 5'-ACTCAT-3' in target gene promoters. Promotes POX1/PRODH1 expression in response to hypoosmolarity stress. Positively regulates the expression of ASN1 and POX2/PRODH2 genes, which are involved in amino acid metabolism. Regulates several metabolic pathways such as myo-inositol, raffinose and trehalose. Regulates several trehalose metabolism genes, including TRE1, TPP5 and TPP6. Mediates recruitment of the histone acetylation machinery to activate auxin-induced transcription. Interacts with ADA2B adapter protein to promote ADA2B-mediated recruitment of SAGA-like histone acetyltransferase complexes to specific auxin-responsive genes. The protein is bZIP transcription factor 11 of Arabidopsis thaliana (Mouse-ear cress).